Reading from the N-terminus, the 501-residue chain is G protein-activated inward rectifier potassium channel 1 (501 aa).

A disordered region spans residues 1–40; the sequence is MSALRRKFGDDYQVVTTSSSGSGLQPQGPGQDPQQQLVPK. Topologically, residues 1 to 80 are cytoplasmic; that stretch reads MSALRRKFGD…LFTTLVDLKW (80 aa). The segment covering 18–38 has biased composition (low complexity); that stretch reads SSSGSGLQPQGPGQDPQQQLV. A helical transmembrane segment spans residues 81 to 105; the sequence is RWNLFIFILTYTVAWLFMASMWWVI. The Extracellular portion of the chain corresponds to 106-129; sequence AYTRGDLNKAHVGNYTPCVANVYN. Residue asparagine 119 is glycosylated (N-linked (GlcNAc...) asparagine). The helical; Pore-forming intramembrane region spans 130-141; sequence FPSAFLFFIETE. Residues 142 to 148 constitute an intramembrane region (pore-forming); it reads ATIGYGY. Positions 143–148 match the Selectivity filter motif; that stretch reads TIGYGY. Residues 149–157 lie on the Extracellular side of the membrane; the sequence is RYITDKCPE. The helical transmembrane segment at 158–179 threads the bilayer; that stretch reads GIILFLFQSILGSIVDAFLIGC. Residues 180 to 501 lie on the Cytoplasmic side of the membrane; it reads MFIKMSQPKK…LRKMNSDRFT (322 aa). The tract at residues 182–209 is polyphosphoinositide (PIP2)-binding; sequence IKMSQPKKRAETLMFSEHAVISMRDGKL. A phosphoserine mark is found at serine 385 and serine 424.

It belongs to the inward rectifier-type potassium channel (TC 1.A.2.1) family. KCNJ3 subfamily. In terms of assembly, associates with KCNJ5/GIRK4 or KCNJ6/GIRK2 to form a G-protein activated heteromultimer pore-forming unit. The resulting inward current is much larger. Associates with KCNJ9/GIRK3 to form a G-protein activated heteromultimer pore-forming unit.

It localises to the membrane. It carries out the reaction K(+)(in) = K(+)(out). Heteromultimer composed of KCNJ3/GIRK1 and KCNJ5/GIRK4 is activated by phosphatidylinositol 4,5 biphosphate (PtdIns(4,5)P2). Its function is as follows. Inward rectifier potassium channels are characterized by a greater tendency to allow potassium to flow into the cell rather than out of it. Their voltage dependence is regulated by the concentration of extracellular potassium; as external potassium is raised, the voltage range of the channel opening shifts to more positive voltages. The inward rectification is mainly due to the blockage of outward current by internal magnesium. This potassium channel is controlled by G proteins. This receptor plays a crucial role in regulating the heartbeat. This is G protein-activated inward rectifier potassium channel 1 (KCNJ3) from Homo sapiens (Human).